The primary structure comprises 373 residues: 2-phosphonomethylmalate synthase (373 aa).

Residues 5–256 (LVLEDTTLRD…DLGIDLTKLK (252 aa)) form the Pyruvate carboxyltransferase domain.

This sequence belongs to the alpha-IPM synthase/homocitrate synthase family.

The catalysed reaction is 3-phosphonopyruvate + acetyl-CoA + H2O = (R)-2-(phosphonomethyl)malate + CoA + H(+). Its pathway is antibiotic biosynthesis. Functionally, acyltransferase involved in the biosynthesis of the phosphonate antibiotic FR-900098, a potent antimalarial agent that acts as an inhibitor of 1-deoxy-D-xylulose 5-phosphate reductoisomerase (DXR), the first enzyme in the nonmevalonate pathway for isoprenoid biosynthesis. Catalyzes the condensation between acetyl-CoA and phosphonopyruvate to yield (R)-2-(phosphonomethyl)malate. The sequence is that of 2-phosphonomethylmalate synthase from Streptomyces rubellomurinus (strain ATCC 31215).